Here is a 350-residue protein sequence, read N- to C-terminus: Transmembrane protein 185A (350 aa).

7 consecutive transmembrane segments (helical) span residues 16 to 36, 41 to 61, 81 to 101, 111 to 131, 177 to 197, 211 to 231, and 240 to 260; these read LIYACLLLFSVLLALRLDGII, WAVFAPIWLWKLMVIVGASVG, FKAMLIAVGIHLLLLMFEVLV, FWLLVFMPLFFVSPVSVAACV, ILMSFLCLVVLYYIVWSVLFL, ITMALSWMTIVVPLLTFEILL, and AFSCIPIFVPLWLSLITLMAT. Residues 298–350 are mediates interaction with MAP1B; it reads DLHHEDNEETEETPVPEPPKIAPMFRKKARVVITQSPGKYVLPPPKLNIEMPD.

The protein belongs to the TMEM185 family. As to quaternary structure, interacts with MAP1B.

It is found in the cell projection. It localises to the dendrite. The protein localises to the membrane. This Homo sapiens (Human) protein is Transmembrane protein 185A (TMEM185A).